Reading from the N-terminus, the 828-residue chain is Transcription factor SOX-6 (828 aa).

The tract at residues 1-51 (MSSKQATSPFACAADGEDAMTQDLTSREKEEGSDQHVASHLPLHPIMHNKP) is disordered. Residues 25–34 (TSREKEEGSD) are compositionally biased toward basic and acidic residues. Thr119 is subject to Phosphothreonine. Residues 184-262 (LAEKERQLST…LLQQQIQVQG (79 aa)) are a coiled coil. Residues 380-470 (SPGAKMPSTP…KSSIPSPIGG (91 aa)) are disordered. Positions 393 to 402 (NTAGTVSPTG) are enriched in polar residues. Position 399 is a phosphoserine (Ser399). Thr401 is modified (phosphothreonine). Glycyl lysine isopeptide (Lys-Gly) (interchain with G-Cter in SUMO) cross-links involve residues Lys404 and Lys417. Phosphoserine is present on residues Ser439 and Ser442. The segment covering 439-461 (SPTSPTQNLFPASKTSPVNLPNK) has biased composition (polar residues). Positions 621-689 (IKRPMNAFMV…IHLEKYPNYK (69 aa)) form a DNA-binding region, HMG box. Positions 753–781 (TPSPQMTSDCSSTSASPEPSLPVIQSTYG) are enriched in polar residues. The interval 753–828 (TPSPQMTSDC…NEAPEAVSAN (76 aa)) is disordered. The segment covering 796-809 (NGEDEMEMYDDYED) has biased composition (acidic residues).

Homodimer. Interacts with DAZAP2. May interact with CENPK. Sumoylation inhibits the transcriptional activity. As to expression, expressed in a wide variety of tissues, most abundantly in skeletal musclen.

It is found in the nucleus. Its subcellular location is the cytoplasm. Functionally, transcription factor that plays a key role in several developmental processes, including neurogenesis, chondrocytes differentiation and cartilage formation. Specifically binds the 5'-AACAAT-3' DNA motif present in enhancers and super-enhancers and promotes expression of genes important for chondrogenesis. Required for overt chondrogenesis when condensed prechondrocytes differentiate into early stage chondrocytes: SOX5 and SOX6 cooperatively bind with SOX9 on active enhancers and super-enhancers associated with cartilage-specific genes, and thereby potentiate SOX9's ability to transactivate. Not involved in precartilaginous condensation, the first step in chondrogenesis, during which skeletal progenitors differentiate into prechondrocytes. Together with SOX5, required to form and maintain a pool of highly proliferating chondroblasts between epiphyses and metaphyses, to form columnar chondroblasts, delay chondrocyte prehypertrophy but promote hypertrophy, and to delay terminal differentiation of chondrocytes on contact with ossification fronts. Binds to the proximal promoter region of the myelin protein MPZ gene, and is thereby involved in the differentiation of oligodendroglia in the developing spinal tube. Binds to the gene promoter of MBP and acts as a transcriptional repressor. The polypeptide is Transcription factor SOX-6 (Homo sapiens (Human)).